A 283-amino-acid polypeptide reads, in one-letter code: tRNA-cytidine(32) 2-sulfurtransferase (283 aa).

Residues 49 to 54 (SGGKDS) carry the PP-loop motif motif. [4Fe-4S] cluster is bound by residues C124, C127, and C215.

The protein belongs to the TtcA family. As to quaternary structure, homodimer. Mg(2+) serves as cofactor. It depends on [4Fe-4S] cluster as a cofactor.

It is found in the cytoplasm. The enzyme catalyses cytidine(32) in tRNA + S-sulfanyl-L-cysteinyl-[cysteine desulfurase] + AH2 + ATP = 2-thiocytidine(32) in tRNA + L-cysteinyl-[cysteine desulfurase] + A + AMP + diphosphate + H(+). Its pathway is tRNA modification. In terms of biological role, catalyzes the ATP-dependent 2-thiolation of cytidine in position 32 of tRNA, to form 2-thiocytidine (s(2)C32). The sulfur atoms are provided by the cysteine/cysteine desulfurase (IscS) system. In Acaryochloris marina (strain MBIC 11017), this protein is tRNA-cytidine(32) 2-sulfurtransferase.